The primary structure comprises 131 residues: Protein SOB FIVE-LIKE 4 (131 aa).

Disordered stretches follow at residues 1–21 (MDKE…SSPI) and 40–131 (IYNY…YRMK). The segment covering 8–18 (SSESGWTTYLS) has biased composition (polar residues). The SOFL-A signature appears at 11 to 16 (SGWTTY). Residues 46–58 (KVEHEEERNKDSD) are compositionally biased toward basic and acidic residues. The short motif at 60-69 (SMASDASSGP) is the SOFL-B element. Positions 79–109 (KALDLKNGKNEGNSKSKNDDDHHNHYHDGKK) are enriched in basic and acidic residues. The Nuclear localization signal motif lies at 107–114 (GKKTSNSY). Residues 114 to 131 (YRKKDKKKRENKSTYRMK) show a composition bias toward basic residues.

This sequence belongs to the SOFL plant protein family. In terms of tissue distribution, expressed, at low levels, in seedlings, roots, flowers and siliques.

The protein resides in the cytoplasm. Its subcellular location is the nucleus. Functionally, involved in cytokinin-mediated development. This is Protein SOB FIVE-LIKE 4 from Arabidopsis thaliana (Mouse-ear cress).